The chain runs to 284 residues: Formamidopyrimidine-DNA glycosylase (284 aa).

Proline 2 serves as the catalytic Schiff-base intermediate with DNA. Glutamate 3 functions as the Proton donor in the catalytic mechanism. Lysine 60 serves as the catalytic Proton donor; for beta-elimination activity. The DNA site is built by histidine 99, arginine 118, and arginine 163. The FPG-type zinc-finger motif lies at 248 to 282 (WVYGRQGQPCRTCGQTIERIKLVGRSTHFCPQCQP). The Proton donor; for delta-elimination activity role is filled by arginine 272.

It belongs to the FPG family. As to quaternary structure, monomer. Requires Zn(2+) as cofactor.

It carries out the reaction Hydrolysis of DNA containing ring-opened 7-methylguanine residues, releasing 2,6-diamino-4-hydroxy-5-(N-methyl)formamidopyrimidine.. The enzyme catalyses 2'-deoxyribonucleotide-(2'-deoxyribose 5'-phosphate)-2'-deoxyribonucleotide-DNA = a 3'-end 2'-deoxyribonucleotide-(2,3-dehydro-2,3-deoxyribose 5'-phosphate)-DNA + a 5'-end 5'-phospho-2'-deoxyribonucleoside-DNA + H(+). Functionally, involved in base excision repair of DNA damaged by oxidation or by mutagenic agents. Acts as a DNA glycosylase that recognizes and removes damaged bases. Has a preference for oxidized purines, such as 7,8-dihydro-8-oxoguanine (8-oxoG). Has AP (apurinic/apyrimidinic) lyase activity and introduces nicks in the DNA strand. Cleaves the DNA backbone by beta-delta elimination to generate a single-strand break at the site of the removed base with both 3'- and 5'-phosphates. In Acaryochloris marina (strain MBIC 11017), this protein is Formamidopyrimidine-DNA glycosylase.